The primary structure comprises 196 residues: Endonuclease V (196 aa).

The Mg(2+) site is built by Asp-37 and Asp-98.

It belongs to the endonuclease V family. Requires Mg(2+) as cofactor.

It is found in the cytoplasm. The catalysed reaction is Endonucleolytic cleavage at apurinic or apyrimidinic sites to products with a 5'-phosphate.. DNA repair enzyme involved in the repair of deaminated bases. Selectively cleaves double-stranded DNA at the second phosphodiester bond 3' to a deoxyinosine leaving behind the intact lesion on the nicked DNA. This chain is Endonuclease V, found in Sulfurisphaera tokodaii (strain DSM 16993 / JCM 10545 / NBRC 100140 / 7) (Sulfolobus tokodaii).